A 909-amino-acid polypeptide reads, in one-letter code: DNA mismatch repair protein MutS (909 aa).

Basic and acidic residues predominate over residues 275 to 290 (QKAERPPLSRPEREEQ). Residues 275–295 (QKAERPPLSRPEREEQGSTLF) are disordered. 661-668 (GPNMGGKS) contributes to the ATP binding site.

It belongs to the DNA mismatch repair MutS family.

In terms of biological role, this protein is involved in the repair of mismatches in DNA. It is possible that it carries out the mismatch recognition step. This protein has a weak ATPase activity. The chain is DNA mismatch repair protein MutS from Mesorhizobium japonicum (strain LMG 29417 / CECT 9101 / MAFF 303099) (Mesorhizobium loti (strain MAFF 303099)).